A 196-amino-acid chain; its full sequence is ATP-dependent Clp protease proteolytic subunit (196 aa).

Ser101 acts as the Nucleophile in catalysis. His126 is a catalytic residue.

Belongs to the peptidase S14 family. In terms of assembly, component of the chloroplastic Clp protease core complex.

The protein localises to the plastid. The protein resides in the chloroplast stroma. It carries out the reaction Hydrolysis of proteins to small peptides in the presence of ATP and magnesium. alpha-casein is the usual test substrate. In the absence of ATP, only oligopeptides shorter than five residues are hydrolyzed (such as succinyl-Leu-Tyr-|-NHMec, and Leu-Tyr-Leu-|-Tyr-Trp, in which cleavage of the -Tyr-|-Leu- and -Tyr-|-Trp bonds also occurs).. Its function is as follows. Cleaves peptides in various proteins in a process that requires ATP hydrolysis. Has a chymotrypsin-like activity. Plays a major role in the degradation of misfolded proteins. The protein is ATP-dependent Clp protease proteolytic subunit of Vitis vinifera (Grape).